Reading from the N-terminus, the 352-residue chain is Methylthioribose-1-phosphate isomerase (352 aa).

Substrate is bound by residues 55 to 57, arginine 98, and glutamine 201; that span reads RGA. Residue aspartate 242 is the Proton donor of the active site. 252–253 lines the substrate pocket; sequence NK.

It belongs to the eIF-2B alpha/beta/delta subunits family. MtnA subfamily.

It carries out the reaction 5-(methylsulfanyl)-alpha-D-ribose 1-phosphate = 5-(methylsulfanyl)-D-ribulose 1-phosphate. It participates in amino-acid biosynthesis; L-methionine biosynthesis via salvage pathway; L-methionine from S-methyl-5-thio-alpha-D-ribose 1-phosphate: step 1/6. In terms of biological role, catalyzes the interconversion of methylthioribose-1-phosphate (MTR-1-P) into methylthioribulose-1-phosphate (MTRu-1-P). This chain is Methylthioribose-1-phosphate isomerase, found in Methylococcus capsulatus (strain ATCC 33009 / NCIMB 11132 / Bath).